Consider the following 321-residue polypeptide: Basic leucine zipper 34 (321 aa).

The interval 97 to 189 is disordered; it reads TDDDNLHSNP…SGNRILDPKR (93 aa). Composition is skewed to low complexity over residues 110-133, 145-155, and 172-182; these read NNKNNNVGPTGSSSNTSTPSNSFN, NMNNNINNNYN, and SNNNSGDSSGN. The bZIP domain occupies 186–238; that stretch reads DPKRVKRILANRQSAQRSRVRKLQYISELERSVTSLQAEVSVLSPRVAFLDHQ. The basic motif stretch occupies residues 188 to 207; the sequence is KRVKRILANRQSAQRSRVRK. The tract at residues 214 to 235 is leucine-zipper; it reads LERSVTSLQAEVSVLSPRVAFL.

In terms of assembly, forms heterodimers with BZIP18, BZIP43 and VIP1/BZIP51. As to expression, expressed in vascular tissues of leaves, stems and siliques, anthers, filaments, tapetum, mature pollen grains, pistil vascular tissues and papillar cells, and funiculi.

The protein localises to the nucleus. Functionally, transcriptional activator involved in the sporophytic control of cell wall patterning and gametophytic control of pollen development. May play a role in the control of metabolic pathways regulating cellular transport and lipid metabolism. The sequence is that of Basic leucine zipper 34 from Arabidopsis thaliana (Mouse-ear cress).